A 544-amino-acid polypeptide reads, in one-letter code: Glucose starvation modulator protein 1 (544 aa).

Positions 20–48 form a DNA-binding region, zn(2)-C6 fungal-type; that stretch reads CVFCHSKHLQCSNERPCKNCMKRNLGDQC. The segment at 65-93 is disordered; the sequence is KKMKSRTNSISSSYRSPSVSESPQNPYTH. The segment covering 70-86 has biased composition (low complexity); sequence RTNSISSSYRSPSVSES. In terms of domain architecture, PAS spans 403–475; that stretch reads SLIDYEKLLL…FKLFKSVAVG (73 aa).

The protein belongs to the ERT1/acuK family.

It localises to the nucleus. In terms of biological role, transcription factor which regulates nonfermentable carbon utilization. In Debaryomyces hansenii (strain ATCC 36239 / CBS 767 / BCRC 21394 / JCM 1990 / NBRC 0083 / IGC 2968) (Yeast), this protein is Glucose starvation modulator protein 1 (GSM1).